A 363-amino-acid chain; its full sequence is MAANFWESTQRRNWLFTKEELAARRQQLENEDPSLVTMYPLPEWRHLYNYFNYQMLRLAKNLSIRQQAIATAQVYMKRFYTRVEIRSTNPTLVLVTAVYLACKMEEMPLHIRNVSLEAKKVWPMETPSLEIAKIGECEFWLISEMSAQLIVHQPYRTLTALQQDFQLANDDHVLAVSFLNDHFMTDLPLLYAPHTIALAAIMLALVLRLSKASSSNNAAAGQQGGAQAGPLGITLASGLSMFQQAVAAKAMTPGGSGSPAMSSPIQQNPPNQAYQLTPQQQEMFRQQQMQQQNRQPETQAKDSPQKEKSKLQRFAAWLSESGVDIEAMIDCTQELIAFYECQESYNEQITRDQINRFVKARGL.

The region spanning 53–143 is the Cyclin N-terminal domain; sequence YQMLRLAKNL…IGECEFWLIS (91 aa). Positions 252–312 are disordered; the sequence is TPGGSGSPAM…SPQKEKSKLQ (61 aa). Polar residues predominate over residues 265–276; it reads IQQNPPNQAYQL. Residues 277-298 are compositionally biased toward low complexity; it reads TPQQQEMFRQQQMQQQNRQPET. Residues 299–310 show a composition bias toward basic and acidic residues; sequence QAKDSPQKEKSK.

Belongs to the cyclin family. Cyclin C subfamily. In terms of assembly, component of the SRB8-11 complex, a regulatory module of the Mediator complex.

It localises to the nucleus. Component of the SRB8-11 complex. The SRB8-11 complex is a regulatory module of the Mediator complex which is itself involved in regulation of basal and activated RNA polymerase II-dependent transcription. The SRB8-11 complex may be involved in the transcriptional repression of a subset of genes regulated by Mediator. It may inhibit the association of the Mediator complex with RNA polymerase II to form the holoenzyme complex. The SRB8-11 complex phosphorylates the C-terminal domain (CTD) of the largest subunit of RNA polymerase II. This is RNA polymerase II holoenzyme cyclin-like subunit (SSN8) from Pyricularia oryzae (strain 70-15 / ATCC MYA-4617 / FGSC 8958) (Rice blast fungus).